A 165-amino-acid chain; its full sequence is UPF0669 protein v1g209471 (165 aa).

The signal sequence occupies residues 1-23 (MQGRYSAPLFLLLWLFFLHGTLC). An N-linked (GlcNAc...) asparagine glycan is attached at Asn38.

Belongs to the UPF0669 family.

The protein localises to the secreted. The chain is UPF0669 protein v1g209471 from Nematostella vectensis (Starlet sea anemone).